Consider the following 515-residue polypeptide: ATP synthase subunit alpha (515 aa).

171-178 (GDRQTGKT) contributes to the ATP binding site.

It belongs to the ATPase alpha/beta chains family. In terms of assembly, F-type ATPases have 2 components, CF(1) - the catalytic core - and CF(0) - the membrane proton channel. CF(1) has five subunits: alpha(3), beta(3), gamma(1), delta(1), epsilon(1). CF(0) has three main subunits: a(1), b(2) and c(9-12). The alpha and beta chains form an alternating ring which encloses part of the gamma chain. CF(1) is attached to CF(0) by a central stalk formed by the gamma and epsilon chains, while a peripheral stalk is formed by the delta and b chains.

It localises to the cell inner membrane. The catalysed reaction is ATP + H2O + 4 H(+)(in) = ADP + phosphate + 5 H(+)(out). Its function is as follows. Produces ATP from ADP in the presence of a proton gradient across the membrane. The alpha chain is a regulatory subunit. The sequence is that of ATP synthase subunit alpha from Stenotrophomonas maltophilia (strain R551-3).